The following is a 196-amino-acid chain: Nucleoside triphosphate pyrophosphatase (196 aa).

Aspartate 70 (proton acceptor) is an active-site residue.

Belongs to the Maf family. A divalent metal cation is required as a cofactor.

The protein resides in the cytoplasm. The catalysed reaction is a ribonucleoside 5'-triphosphate + H2O = a ribonucleoside 5'-phosphate + diphosphate + H(+). It carries out the reaction a 2'-deoxyribonucleoside 5'-triphosphate + H2O = a 2'-deoxyribonucleoside 5'-phosphate + diphosphate + H(+). In terms of biological role, nucleoside triphosphate pyrophosphatase. May have a dual role in cell division arrest and in preventing the incorporation of modified nucleotides into cellular nucleic acids. This chain is Nucleoside triphosphate pyrophosphatase, found in Gloeothece citriformis (strain PCC 7424) (Cyanothece sp. (strain PCC 7424)).